The chain runs to 130 residues: L-ectoine synthase (130 aa).

This sequence belongs to the ectoine synthase family.

It catalyses the reaction (2S)-4-acetamido-2-aminobutanoate = L-ectoine + H2O. Its pathway is amine and polyamine biosynthesis; ectoine biosynthesis; L-ectoine from L-aspartate 4-semialdehyde: step 3/3. Catalyzes the circularization of gamma-N-acetyl-alpha,gamma-diaminobutyric acid (ADABA) to ectoine (1,4,5,6-tetrahydro-2-methyl-4-pyrimidine carboxylic acid), which is an excellent osmoprotectant. This Desulfatibacillum aliphaticivorans protein is L-ectoine synthase.